Here is a 375-residue protein sequence, read N- to C-terminus: DNA replication and repair protein RecF (375 aa).

Residue 30 to 37 (GENAQGKT) coordinates ATP.

Belongs to the RecF family.

Its subcellular location is the cytoplasm. In terms of biological role, the RecF protein is involved in DNA metabolism; it is required for DNA replication and normal SOS inducibility. RecF binds preferentially to single-stranded, linear DNA. It also seems to bind ATP. The chain is DNA replication and repair protein RecF from Bacillus thuringiensis (strain Al Hakam).